The chain runs to 342 residues: Maltose regulon regulatory protein MalI (342 aa).

Residues 7–61 (ITIHDVALAAGVSVSTVSLVLSGKGRISTATGERVNAAIEELGFVRNRQASALRG) enclose the HTH lacI-type domain. The H-T-H motif DNA-binding region spans 9–28 (IHDVALAAGVSVSTVSLVLS).

Its function is as follows. Repressor for the malX and malY genes. Also regulates its own expression. Binds maltose as an inducer. In Escherichia coli (strain K12), this protein is Maltose regulon regulatory protein MalI (malI).